We begin with the raw amino-acid sequence, 37 residues long: Cytochrome b6-f complex subunit 5 (37 aa).

A helical membrane pass occupies residues 5–25 (LLSGIVLGMITVSALGLFVAA).

It belongs to the PetG family. The 4 large subunits of the cytochrome b6-f complex are cytochrome b6, subunit IV (17 kDa polypeptide, PetD), cytochrome f and the Rieske protein, while the 4 small subunits are PetG, PetL, PetM and PetN. The complex functions as a dimer.

It is found in the plastid. Its subcellular location is the chloroplast thylakoid membrane. In terms of biological role, component of the cytochrome b6-f complex, which mediates electron transfer between photosystem II (PSII) and photosystem I (PSI), cyclic electron flow around PSI, and state transitions. PetG is required for either the stability or assembly of the cytochrome b6-f complex. The sequence is that of Cytochrome b6-f complex subunit 5 from Trieres chinensis (Marine centric diatom).